A 128-amino-acid chain; its full sequence is Adrenodoxin (128 aa).

S3 carries the post-translational modification Phosphoserine. K6 carries the N6-acetyllysine; alternate modification. At K6 the chain carries N6-succinyllysine; alternate. In terms of domain architecture, 2Fe-2S ferredoxin-type spans 7 to 111 (VTVNFINRDG…NMTVRVPDAV (105 aa)). Residues C46, C52, C55, and C92 each contribute to the [2Fe-2S] cluster site. K98 carries the N6-succinyllysine modification. S117 is subject to Phosphoserine.

It belongs to the adrenodoxin/putidaredoxin family. Interacts with CYP11A1. [2Fe-2S] cluster is required as a cofactor.

The protein resides in the mitochondrion matrix. Functionally, essential for the synthesis of various steroid hormones. Participates in the reduction of mitochondrial cytochrome P450 for steroidogenesis. Transfers electrons from adrenodoxin reductase to CYP11A1, a cytochrome P450 that catalyzes cholesterol side-chain cleavage. Does not form a ternary complex with adrenodoxin reductase and CYP11A1 but shuttles between the two enzymes to transfer electrons. In Ovis aries (Sheep), this protein is Adrenodoxin (FDX1).